We begin with the raw amino-acid sequence, 268 residues long: Tryptophan synthase alpha chain (268 aa).

Active-site proton acceptor residues include Glu49 and Asp60.

This sequence belongs to the TrpA family. In terms of assembly, tetramer of two alpha and two beta chains.

It catalyses the reaction (1S,2R)-1-C-(indol-3-yl)glycerol 3-phosphate + L-serine = D-glyceraldehyde 3-phosphate + L-tryptophan + H2O. Its pathway is amino-acid biosynthesis; L-tryptophan biosynthesis; L-tryptophan from chorismate: step 5/5. Its function is as follows. The alpha subunit is responsible for the aldol cleavage of indoleglycerol phosphate to indole and glyceraldehyde 3-phosphate. The protein is Tryptophan synthase alpha chain of Vibrio vulnificus (strain YJ016).